We begin with the raw amino-acid sequence, 135 residues long: Large ribosomal subunit protein uL16 (135 aa).

The protein belongs to the universal ribosomal protein uL16 family. Part of the 50S ribosomal subunit.

Binds 23S rRNA and is also seen to make contacts with the A and possibly P site tRNAs. The chain is Large ribosomal subunit protein uL16 from Coprothermobacter proteolyticus (strain ATCC 35245 / DSM 5265 / OCM 4 / BT).